We begin with the raw amino-acid sequence, 379 residues long: Pectin lyase B (379 aa).

Residues M1–A19 form the signal peptide. Disulfide bonds link C82/C101 and C91/C225. N128 is a glycosylation site (N-linked (GlcNAc...) asparagine). R255 is an active-site residue. An intrachain disulfide couples C322 to C330.

Belongs to the polysaccharide lyase 1 family.

It localises to the secreted. It carries out the reaction Eliminative cleavage of (1-&gt;4)-alpha-D-galacturonan methyl ester to give oligosaccharides with 4-deoxy-6-O-methyl-alpha-D-galact-4-enuronosyl groups at their non-reducing ends.. Its function is as follows. Pectinolytic enzymes consist of four classes of enzymes: pectin lyase, polygalacturonase, pectin methylesterase and rhamnogalacturonase. Among pectinolytic enzymes, pectin lyase is the most important in depolymerization of pectin, since it cleaves internal glycosidic bonds of highly methylated pectins. This is Pectin lyase B (pelB) from Emericella nidulans (strain FGSC A4 / ATCC 38163 / CBS 112.46 / NRRL 194 / M139) (Aspergillus nidulans).